The primary structure comprises 285 residues: Probable endonuclease 4 (285 aa).

Residues His69, His109, Glu145, Asp179, His182, His216, Asp229, His231, and Glu261 each contribute to the Zn(2+) site.

This sequence belongs to the AP endonuclease 2 family. Zn(2+) serves as cofactor.

It carries out the reaction Endonucleolytic cleavage to 5'-phosphooligonucleotide end-products.. Endonuclease IV plays a role in DNA repair. It cleaves phosphodiester bonds at apurinic or apyrimidinic (AP) sites, generating a 3'-hydroxyl group and a 5'-terminal sugar phosphate. This Yersinia pseudotuberculosis serotype O:1b (strain IP 31758) protein is Probable endonuclease 4.